Here is a 92-residue protein sequence, read N- to C-terminus: Small ribosomal subunit protein uS19 (92 aa).

It belongs to the universal ribosomal protein uS19 family.

In terms of biological role, protein S19 forms a complex with S13 that binds strongly to the 16S ribosomal RNA. This is Small ribosomal subunit protein uS19 from Cyanothece sp. (strain PCC 7425 / ATCC 29141).